The chain runs to 486 residues: Serine/threonine-protein kinase 33 (486 aa).

The tract at residues Val-39–Lys-100 is disordered. Residues Glu-41 to Phe-53 are compositionally biased toward polar residues. Over residues Pro-57 to Ser-66 the composition is skewed to basic and acidic residues. Positions Asp-68–Ser-80 are enriched in polar residues. The region spanning Tyr-116–Leu-381 is the Protein kinase domain. Residues Leu-122–Val-130 and Lys-145 each bind ATP. The Proton acceptor role is filled by Asp-238. The tract at residues Lys-402–Arg-451 is disordered. Ser-407 is subject to Phosphoserine. Residues Thr-413–Lys-426 show a composition bias toward basic and acidic residues. The segment covering Tyr-428 to Ser-440 has biased composition (polar residues).

This sequence belongs to the protein kinase superfamily. CAMK Ser/Thr protein kinase family. CaMK subfamily. In terms of assembly, interacts with vimentin/VIM. Post-translationally, autophosphorylated.

It is found in the cytoplasm. The protein resides in the perinuclear region. It carries out the reaction L-seryl-[protein] + ATP = O-phospho-L-seryl-[protein] + ADP + H(+). The catalysed reaction is L-threonyl-[protein] + ATP = O-phospho-L-threonyl-[protein] + ADP + H(+). Functionally, serine/threonine protein kinase which phosphorylates vimentin/VIM. Therefore may play a specific role in the dynamic behavior of the intermediate filament cytoskeleton. The sequence is that of Serine/threonine-protein kinase 33 (STK33) from Bos taurus (Bovine).